The following is a 328-amino-acid chain: Tetraacyldisaccharide 4'-kinase (328 aa).

Residue 55–62 participates in ATP binding; it reads TAGGNGKT.

Belongs to the LpxK family.

It carries out the reaction a lipid A disaccharide + ATP = a lipid IVA + ADP + H(+). It participates in glycolipid biosynthesis; lipid IV(A) biosynthesis; lipid IV(A) from (3R)-3-hydroxytetradecanoyl-[acyl-carrier-protein] and UDP-N-acetyl-alpha-D-glucosamine: step 6/6. In terms of biological role, transfers the gamma-phosphate of ATP to the 4'-position of a tetraacyldisaccharide 1-phosphate intermediate (termed DS-1-P) to form tetraacyldisaccharide 1,4'-bis-phosphate (lipid IVA). This is Tetraacyldisaccharide 4'-kinase from Escherichia coli O17:K52:H18 (strain UMN026 / ExPEC).